A 418-amino-acid polypeptide reads, in one-letter code: Hepatic and glial cell adhesion molecule (418 aa).

The N-terminal stretch at 1–33 (MKREREAPSRAFSALRLAPFVYLLLIQTEPLEG) is a signal peptide. One can recognise an Ig-like V-type domain in the interval 34–141 (VNITSPVRLI…TGEKTINLTV (108 aa)). Residues 34–240 (VNITSPVRLI…VKITVYRRSS (207 aa)) are Extracellular-facing. N-linked (GlcNAc...) asparagine glycosylation is found at N35, N138, N167, and N189. In terms of domain architecture, Ig-like C2-type spans 148-234 (PQVLVASTTV…QGRSPPVKIT (87 aa)). Cysteines 168 and 217 form a disulfide. Residues 241–261 (LYIILSTGGIFLLVTLVTVCA) form a helical membrane-spanning segment. The Cytoplasmic portion of the chain corresponds to 262 to 418 (CWKPSKKSGK…DEAGPVEISA (157 aa)). The interval 271 to 418 (KKRKLEKQNS…DEAGPVEISA (148 aa)) is disordered. Phosphoserine is present on S280. Residues 287–308 (SDDRLKPEADTLPRSGEQERKN) show a composition bias toward basic and acidic residues. Residues S352 and S379 each carry the phosphoserine modification. Low complexity predominate over residues 385–400 (GSPGRSRSASRTLRTA).

As to quaternary structure, homodimer. Dimer formation occurs predominantly through cis interactions on the cell surface. Part of a complex containing MLC1, TRPV4, AQP4 and ATP1B1. Interacts with CLCN2. In terms of processing, N-glycosylated.

Its subcellular location is the cytoplasm. It is found in the cell membrane. In terms of biological role, involved in regulating cell motility and cell-matrix interactions. May inhibit cell growth through suppression of cell proliferation. In glia, associates and targets CLCN2 at astrocytic processes and myelinated fiber tracts where it may regulate transcellular chloride flux involved in neuron excitability. This chain is Hepatic and glial cell adhesion molecule, found in Bos taurus (Bovine).